The sequence spans 349 residues: Ribosomal RNA small subunit methyltransferase H 2 (349 aa).

S-adenosyl-L-methionine contacts are provided by residues Gly80–His82, Asp100, Phe130, Asp149, and Gln156.

Belongs to the methyltransferase superfamily. RsmH family.

Its subcellular location is the cytoplasm. It catalyses the reaction cytidine(1402) in 16S rRNA + S-adenosyl-L-methionine = N(4)-methylcytidine(1402) in 16S rRNA + S-adenosyl-L-homocysteine + H(+). Specifically methylates the N4 position of cytidine in position 1402 (C1402) of 16S rRNA. In Alkaliphilus metalliredigens (strain QYMF), this protein is Ribosomal RNA small subunit methyltransferase H 2.